The following is a 597-amino-acid chain: DNA primase (597 aa).

Positions 40, 43, 61, and 64 each coordinate Zn(2+). The segment at 40 to 64 (CPFHGEKTPSFSVSPEKQIFHCFGC) adopts a CHC2-type zinc-finger fold. The region spanning 262-342 (QEALLVEGFA…RVKVASLPNG (81 aa)) is the Toprim domain. Residues Glu268, Asp311, and Asp313 each coordinate Mg(2+). Over residues 429 to 447 (LSRSQRERTKPREAPDGET) the composition is skewed to basic and acidic residues. The tract at residues 429 to 448 (LSRSQRERTKPREAPDGETA) is disordered.

It belongs to the DnaG primase family. In terms of assembly, monomer. Interacts with replicative helicase DnaB, as DnaB(6):DnaG(3). A stable complex DnaI(6):DnaB(6):DnaG(3) fragment can be isolated; DnaI and DnaG do not contact each other (DnaI in this complex is derived from B.subtilis). Requires Zn(2+) as cofactor. It depends on Mg(2+) as a cofactor.

It carries out the reaction ssDNA + n NTP = ssDNA/pppN(pN)n-1 hybrid + (n-1) diphosphate.. RNA polymerase that catalyzes the synthesis of short RNA molecules used as primers for DNA polymerase during DNA replication. This is DNA primase from Geobacillus stearothermophilus (Bacillus stearothermophilus).